Reading from the N-terminus, the 137-residue chain is Small ribosomal subunit protein uS9 (137 aa).

The tract at residues 100 to 137 is disordered; that stretch reads ENRPPLKSEGYLTRDPRAKERKKYGLHKARKAPQYSKR. The span at 118-137 shows a compositional bias: basic residues; that stretch reads KERKKYGLHKARKAPQYSKR.

The protein belongs to the universal ribosomal protein uS9 family.

The protein is Small ribosomal subunit protein uS9 of Microcystis aeruginosa (strain NIES-843 / IAM M-2473).